Consider the following 495-residue polypeptide: NADH-ubiquinone oxidoreductase chain 4 (495 aa).

Transmembrane regions (helical) follow at residues 9-29, 39-59, 89-109, 118-138, 139-159, 173-193, 214-234, 245-265, 272-292, 313-333, 335-355, 367-387, 388-408, 413-433, and 457-477; these read YFDL…LLFI, LIGL…WIQF, LSLF…LVGW, EYII…CMLD, LLLF…IIGV, FFLY…LILL, ILLW…VPVH, PTAG…YGFL, FPEA…IAII, VAHM…GIGG, ILLM…VGVL, YGGL…FTLA, NMSL…VGAF, LVAT…LWLY, and VFIF…PKVF.

Belongs to the complex I subunit 4 family.

The protein resides in the mitochondrion membrane. The enzyme catalyses a ubiquinone + NADH + 5 H(+)(in) = a ubiquinol + NAD(+) + 4 H(+)(out). Its function is as follows. Core subunit of the mitochondrial membrane respiratory chain NADH dehydrogenase (Complex I) that is believed to belong to the minimal assembly required for catalysis. Complex I functions in the transfer of electrons from NADH to the respiratory chain. The immediate electron acceptor for the enzyme is believed to be ubiquinone. In Triticum aestivum (Wheat), this protein is NADH-ubiquinone oxidoreductase chain 4 (ND4).